The chain runs to 398 residues: Ubiquitin-like modifier-activating enzyme 5 (398 aa).

5 residues coordinate ATP: Gly-79, Asp-100, Lys-123, Asn-146, and Asn-180. Residues Cys-222 and Cys-225 each coordinate Zn(2+). The active-site Glycyl thioester intermediate is the Cys-246. Residues Cys-299 and Cys-304 each coordinate Zn(2+). The UFM1-interacting sequence (UIS) motif lies at 330–342 (VVHEDNEWGIELV). Residues 343–373 (SEVTEAELQDASGPIPDLPEGITVAYTIPEK) form a linker region. Residues 383–398 (ETEQSLEELMAQMKKI) carry the UFC1-binding sequence (UFC) motif.

The protein belongs to the ubiquitin-activating E1 family. UBA5 subfamily. In terms of assembly, homodimer; homodimerization is required for ufm1 activation. Interacts (via UIS motif) with ufm1; binds ufm1 via a trans-binding mechanism in which ufm1 interacts with distinct sites in both subunits of the uba5 homodimer. Interacts (via C-terminus) with ufc1.

It localises to the cytoplasm. The protein resides in the nucleus. It is found in the endoplasmic reticulum membrane. The protein localises to the golgi apparatus. Functionally, E1-like enzyme which specifically catalyzes the first step in ufmylation. Activates ufm1 by first adenylating its C-terminal glycine residue with ATP, and thereafter linking this residue to the side chain of a cysteine residue in E1, yielding a ufm1-E1 thioester and free AMP. Activates ufm1 via a trans-binding mechanism, in which ufm1 interacts with distinct sites in both subunits of the uba5 homodimer. Trans-binding also promotes stabilization of the uba5 homodimer, and enhances ATP-binding. Transfer of ufm1 from uba5 to the E2-like enzyme UFC1 also takes place using a trans mechanism. Ufmylation plays a key role in various processes, such as ribosome recycling, response to DNA damage, interferon response or reticulophagy (also called ER-phagy). In Danio rerio (Zebrafish), this protein is Ubiquitin-like modifier-activating enzyme 5.